A 163-amino-acid chain; its full sequence is Putative C-type lectin protein FPV239 (163 aa).

The 112-residue stretch at 48-159 (CKEGWVGYNK…CFLPKKWICR (112 aa)) folds into the C-type lectin domain. 2 cysteine pairs are disulfide-bonded: C76–C158 and C137–C150.

This is Putative C-type lectin protein FPV239 from Fowlpox virus (strain NVSL) (FPV).